A 362-amino-acid chain; its full sequence is Endolytic peptidoglycan transglycosylase RlpA (362 aa).

An N-terminal signal peptide occupies residues 1-17 (MRKQWLGICIAAGMLAA). A lipid anchor (N-palmitoyl cysteine) is attached at Cys18. Cys18 is lipidated: S-diacylglycerol cysteine. Residues 198–276 (PDLSGGAGTS…PSTTPATSPA (79 aa)) are disordered. The segment covering 262–276 (PVVTAPSTTPATSPA) has biased composition (low complexity). The SPOR domain occupies 285–361 (QSASGNFMVQ…AQLQSFITTA (77 aa)).

It belongs to the RlpA family.

It is found in the cell membrane. In terms of biological role, lytic transglycosylase with a strong preference for naked glycan strands that lack stem peptides. This Escherichia coli O157:H7 protein is Endolytic peptidoglycan transglycosylase RlpA.